The primary structure comprises 202 residues: Small ribosomal subunit protein uS4 (202 aa).

Residues 1–13 (MSRYRGPRLRITR) are compositionally biased toward basic residues. Positions 1–43 (MSRYRGPRLRITRRLGDLPGLTRKAAKRSHPPGQHGQARRKRS) are disordered. The S4 RNA-binding domain occupies 90–152 (NRLDNVCFRL…KGSKKLAEAN (63 aa)).

Belongs to the universal ribosomal protein uS4 family. Part of the 30S ribosomal subunit. Contacts protein S5. The interaction surface between S4 and S5 is involved in control of translational fidelity.

Functionally, one of the primary rRNA binding proteins, it binds directly to 16S rRNA where it nucleates assembly of the body of the 30S subunit. With S5 and S12 plays an important role in translational accuracy. In Prochlorococcus marinus (strain MIT 9303), this protein is Small ribosomal subunit protein uS4.